A 563-amino-acid chain; its full sequence is Arginine--tRNA ligase (563 aa).

The 'HIGH' region signature appears at 121 to 131 (PNIAKPMSMGH).

The protein belongs to the class-I aminoacyl-tRNA synthetase family. In terms of assembly, monomer.

It localises to the cytoplasm. The enzyme catalyses tRNA(Arg) + L-arginine + ATP = L-arginyl-tRNA(Arg) + AMP + diphosphate. The protein is Arginine--tRNA ligase of Leuconostoc mesenteroides subsp. mesenteroides (strain ATCC 8293 / DSM 20343 / BCRC 11652 / CCM 1803 / JCM 6124 / NCDO 523 / NBRC 100496 / NCIMB 8023 / NCTC 12954 / NRRL B-1118 / 37Y).